Reading from the N-terminus, the 502-residue chain is Glutamate--tRNA ligase (502 aa).

The short motif at 9 to 19 is the 'HIGH' region element; sequence PSPTGFPHVGT. A 'KMSKS' region motif is present at residues 250–254; it reads KLSKR. ATP is bound at residue Lys253.

It belongs to the class-I aminoacyl-tRNA synthetase family. Glutamate--tRNA ligase type 1 subfamily. In terms of assembly, monomer.

It localises to the cytoplasm. The catalysed reaction is tRNA(Glu) + L-glutamate + ATP = L-glutamyl-tRNA(Glu) + AMP + diphosphate. Catalyzes the attachment of glutamate to tRNA(Glu) in a two-step reaction: glutamate is first activated by ATP to form Glu-AMP and then transferred to the acceptor end of tRNA(Glu). The polypeptide is Glutamate--tRNA ligase (Acinetobacter baumannii (strain AYE)).